Reading from the N-terminus, the 470-residue chain is Neuraminidase (470 aa).

The Intravirion portion of the chain corresponds to 1–6 (MNPNQK). Residues 7–27 (IITIGSISIAIGIISLMLQIG) traverse the membrane as a helical segment. The interval 11–33 (GSISIAIGIISLMLQIGNIISMW) is involved in apical transport and lipid raft association. At 28-470 (NIISMWASHS…GAELPFTIDK (443 aa)) the chain is on the virion surface side. A hypervariable stalk region region spans residues 36-90 (HSIQTGSQNHTGICNQRIITYENSTWVNHTYVNINNTNVVTGKDKTSVTLAGNSS). Residues Asn44, Asn58, Asn63, Asn70, and Asn88 are each glycosylated (N-linked (GlcNAc...) asparagine; by host). The head of neuraminidase stretch occupies residues 91–470 (LCSISGWAIY…GAELPFTIDK (380 aa)). Cystine bridges form between Cys92–Cys417, Cys124–Cys129, Cys184–Cys231, Cys233–Cys238, Cys279–Cys292, Cys281–Cys290, Cys318–Cys335, and Cys421–Cys447. Arg118 contributes to the substrate binding site. A glycan (N-linked (GlcNAc...) asparagine; by host) is linked at Asn146. Asp151 acts as the Proton donor/acceptor in catalysis. Position 152 (Arg152) interacts with substrate. Asn235 is a glycosylation site (N-linked (GlcNAc...) asparagine; by host). 277-278 (EE) provides a ligand contact to substrate. Arg293 contacts substrate. Positions 294, 298, and 324 each coordinate Ca(2+). Substrate is bound at residue Arg368. Catalysis depends on Tyr402, which acts as the Nucleophile. N-linked (GlcNAc...) asparagine; by host glycans are attached at residues Asn434 and Asn455.

It belongs to the glycosyl hydrolase 34 family. Homotetramer. It depends on Ca(2+) as a cofactor. In terms of processing, N-glycosylated.

It is found in the virion membrane. Its subcellular location is the host apical cell membrane. It catalyses the reaction Hydrolysis of alpha-(2-&gt;3)-, alpha-(2-&gt;6)-, alpha-(2-&gt;8)- glycosidic linkages of terminal sialic acid residues in oligosaccharides, glycoproteins, glycolipids, colominic acid and synthetic substrates.. With respect to regulation, inhibited by the neuraminidase inhibitors zanamivir (Relenza) and oseltamivir (Tamiflu). These drugs interfere with the release of progeny virus from infected cells and are effective against all influenza strains. Resistance to neuraminidase inhibitors is quite rare. Its function is as follows. Catalyzes the removal of terminal sialic acid residues from viral and cellular glycoconjugates. Cleaves off the terminal sialic acids on the glycosylated HA during virus budding to facilitate virus release. Additionally helps virus spread through the circulation by further removing sialic acids from the cell surface. These cleavages prevent self-aggregation and ensure the efficient spread of the progeny virus from cell to cell. Otherwise, infection would be limited to one round of replication. Described as a receptor-destroying enzyme because it cleaves a terminal sialic acid from the cellular receptors. May facilitate viral invasion of the upper airways by cleaving the sialic acid moieties on the mucin of the airway epithelial cells. Likely to plays a role in the budding process through its association with lipid rafts during intracellular transport. May additionally display a raft-association independent effect on budding. Plays a role in the determination of host range restriction on replication and virulence. Sialidase activity in late endosome/lysosome traffic seems to enhance virus replication. In Aves (Human), this protein is Neuraminidase.